We begin with the raw amino-acid sequence, 341 residues long: UDP-3-O-acylglucosamine N-acyltransferase (341 aa).

Catalysis depends on His241, which acts as the Proton acceptor.

It belongs to the transferase hexapeptide repeat family. LpxD subfamily. Homotrimer.

The enzyme catalyses a UDP-3-O-[(3R)-3-hydroxyacyl]-alpha-D-glucosamine + a (3R)-hydroxyacyl-[ACP] = a UDP-2-N,3-O-bis[(3R)-3-hydroxyacyl]-alpha-D-glucosamine + holo-[ACP] + H(+). The protein operates within bacterial outer membrane biogenesis; LPS lipid A biosynthesis. Functionally, catalyzes the N-acylation of UDP-3-O-acylglucosamine using 3-hydroxyacyl-ACP as the acyl donor. Is involved in the biosynthesis of lipid A, a phosphorylated glycolipid that anchors the lipopolysaccharide to the outer membrane of the cell. The chain is UDP-3-O-acylglucosamine N-acyltransferase from Christiangramia forsetii (strain DSM 17595 / CGMCC 1.15422 / KT0803) (Gramella forsetii).